A 57-amino-acid chain; its full sequence is Large ribosomal subunit protein bL32 (57 aa).

A disordered region spans residues 1 to 20; that stretch reads MAVQQRRSSKHRRDKRRSHD. Over residues 7 to 18 the composition is skewed to basic residues; it reads RSSKHRRDKRRS.

The protein belongs to the bacterial ribosomal protein bL32 family.

This is Large ribosomal subunit protein bL32 (rpmF) from Mycoplasma genitalium (strain ATCC 33530 / DSM 19775 / NCTC 10195 / G37) (Mycoplasmoides genitalium).